A 339-amino-acid polypeptide reads, in one-letter code: GTP 3',8-cyclase (339 aa).

The 237-residue stretch at arginine 13–alanine 249 folds into the Radical SAM core domain. Arginine 22 provides a ligand contact to GTP. Positions 29 and 33 each coordinate [4Fe-4S] cluster. Tyrosine 35 provides a ligand contact to S-adenosyl-L-methionine. Cysteine 36 contributes to the [4Fe-4S] cluster binding site. A GTP-binding site is contributed by arginine 75. Position 79 (glycine 79) interacts with S-adenosyl-L-methionine. GTP is bound at residue threonine 106. Residue serine 130 coordinates S-adenosyl-L-methionine. Lysine 168 serves as a coordination point for GTP. An S-adenosyl-L-methionine-binding site is contributed by methionine 202. Residues cysteine 266 and cysteine 269 each coordinate [4Fe-4S] cluster. Position 271 to 273 (arginine 271 to arginine 273) interacts with GTP. [4Fe-4S] cluster is bound at residue cysteine 283.

The protein belongs to the radical SAM superfamily. MoaA family. Monomer and homodimer. [4Fe-4S] cluster is required as a cofactor.

It carries out the reaction GTP + AH2 + S-adenosyl-L-methionine = (8S)-3',8-cyclo-7,8-dihydroguanosine 5'-triphosphate + 5'-deoxyadenosine + L-methionine + A + H(+). Its pathway is cofactor biosynthesis; molybdopterin biosynthesis. Catalyzes the cyclization of GTP to (8S)-3',8-cyclo-7,8-dihydroguanosine 5'-triphosphate. The chain is GTP 3',8-cyclase from Xanthomonas campestris pv. campestris (strain B100).